The primary structure comprises 281 residues: Putative pyruvate, phosphate dikinase regulatory protein (281 aa).

Gly150–Thr157 serves as a coordination point for ADP.

It belongs to the pyruvate, phosphate/water dikinase regulatory protein family. PDRP subfamily.

It carries out the reaction N(tele)-phospho-L-histidyl/L-threonyl-[pyruvate, phosphate dikinase] + ADP = N(tele)-phospho-L-histidyl/O-phospho-L-threonyl-[pyruvate, phosphate dikinase] + AMP + H(+). The enzyme catalyses N(tele)-phospho-L-histidyl/O-phospho-L-threonyl-[pyruvate, phosphate dikinase] + phosphate + H(+) = N(tele)-phospho-L-histidyl/L-threonyl-[pyruvate, phosphate dikinase] + diphosphate. Bifunctional serine/threonine kinase and phosphorylase involved in the regulation of the pyruvate, phosphate dikinase (PPDK) by catalyzing its phosphorylation/dephosphorylation. The chain is Putative pyruvate, phosphate dikinase regulatory protein from Sorangium cellulosum (strain So ce56) (Polyangium cellulosum (strain So ce56)).